The chain runs to 35 residues: Cupiennin-1d (35 aa).

Glu-35 bears the Glutamic acid 1-amide mark.

The protein belongs to the cationic peptide 04 (cupiennin) family. 01 subfamily. In terms of tissue distribution, expressed by the venom gland.

It localises to the secreted. Functionally, has antimicrobial activity against B.subtilis, E.coli, E.faecalis, P.aeruginosa, and S.aureus. Has insecticidal and hemolytic activities. Probably acts by disturbing membrane function with its amphipathic structure. This Cupiennius salei (American wandering spider) protein is Cupiennin-1d.